The sequence spans 426 residues: Putative competence-damage inducible protein (426 aa).

It belongs to the CinA family.

The protein is Putative competence-damage inducible protein of Symbiobacterium thermophilum (strain DSM 24528 / JCM 14929 / IAM 14863 / T).